A 387-amino-acid polypeptide reads, in one-letter code: Acyltransferase MdmB (387 aa).

The next 10 helical transmembrane spans lie at 8–28 (LPSL…CHIA), 45–65 (ITTL…FVLA), 85–105 (IYPL…SLAE), 139–161 (TPSW…YRLV), 170–190 (WWCA…TSQF), 209–229 (CWLP…ALIL), 236–256 (GPGV…TQVV), 258–278 (PMFT…TALA), 292–312 (AVLV…FMVI), and 336–356 (ALAL…HTVV).

This sequence belongs to the acyltransferase 3 family.

Its subcellular location is the cell membrane. Functionally, catalyzes the acylation of the mycaminose sugar during midecamycin biosynthesis. This Streptomyces mycarofaciens protein is Acyltransferase MdmB (mdmB).